The chain runs to 222 residues: Germin-like protein 11-1 (222 aa).

The first 23 residues, 1–23, serve as a signal peptide directing secretion; it reads MKLSTVLCCYLLLLGLFAPEIIS. C32 and C49 are disulfide-bonded. The region spanning 72–195 is the Cupin type-1 domain; sequence DNMVRSSANI…AMFAPDSEVA (124 aa). Residues H111, H113, E118, and H157 each contribute to the Mn(2+) site.

Belongs to the germin family. Oligomer (believed to be a pentamer but probably hexamer).

Its subcellular location is the secreted. The protein resides in the extracellular space. The protein localises to the apoplast. In terms of biological role, may play a role in plant defense. Probably has no oxalate oxidase activity even if the active site is conserved. The polypeptide is Germin-like protein 11-1 (Oryza sativa subsp. japonica (Rice)).